The following is a 7094-amino-acid chain: Replicase polyprotein 1ab (7094 aa).

A CoV Nsp1 globular domain is found at 54-196 (PENHVMVDCR…PWVMYLRKCG (143 aa)). A BetaCoV Nsp1 C-terminal domain is found at 216–246 (FKVEDAYDLVHDEPKGKFSKKAYALIRGYRG). The 270-residue stretch at 250–519 (LLYVDQYGCD…LICKALYLDY (270 aa)) folds into the CoV Nsp2 N-terminal domain. Residues C392, C397, C413, and C416 each coordinate Zn(2+). The interval 392–416 (CEQDLCDFKGWVPGNMIDGFACTTC) is C4. Positions 524–713 (CGNLHQRELL…AQAFRSVAKV (190 aa)) constitute a CoV Nsp2 middle domain. The CoV Nsp2 C-terminal domain occupies 733–851 (RRRICLSGSK…LDQAWRVPCA (119 aa)). The region spanning 853–966 (RRVTFKEQPT…LYCAFTAPED (114 aa)) is the Ubiquitin-like 1 domain. The region spanning 1036–1274 (DLESVIQDYE…IAQLYGSCIT (239 aa)) is the Peptidase C16 1 domain. The active-site For PL1-PRO activity is C1074. C1151, C1154, C1177, and C1179 together coordinate Zn(2+). Residues 1151-1179 (CIKCDLALKLKGLDAMFFYGDVVSHVCKC) form a C4-type 1 zinc finger. Active-site for PL1-PRO activity residues include H1225 and D1236. Residues 1275 to 1435 (PNVCFVKGDI…LISKCQITAV (161 aa)) enclose the Macro domain. Positions 1491–1563 (DDARTFVQSN…VAQIKALFLD (73 aa)) constitute a DPUP domain. A Ubiquitin-like 2 domain is found at 1562 to 1617 (LDKVDILLTVDGVNFTNRFVPVGESFGKSLGNVFCDGVNVTKHKCDINYKGKVFFQ). One can recognise a Peptidase C16 2 domain in the interval 1631 to 1892 (SSFNFDQKEL…KIEYNPDLSQ (262 aa)). C1671 acts as the For PL2-PRO activity in catalysis. Zn(2+) contacts are provided by C1749, C1751, C1783, and C1785. A C4-type 2 zinc finger spans residues 1749 to 1785 (CKCGVKQEQRTGVDAVMHFGTLSREDLEIGYTVDCSC). Residues H1828 and D1842 each act as for PL2-PRO activity in the active site. The region spanning 1906–2007 (IKAQFKTFEK…TYFNRPLLVD (102 aa)) is the Nucleic acid-binding domain. The G2M domain occupies 2020–2169 (DDGGDISESD…ADNKVIYTTE (150 aa)). The next 3 helical transmembrane spans lie at 2138–2158 (ISAC…WIKI), 2199–2219 (ACII…NVIF), and 2227–2247 (IGFL…TFSL). An HD1 region spans residues 2138-2385 (ISACFNFIKW…ASFIKLFILF (248 aa)). Residues 2235-2296 (GKIAQWIKST…AIDVVQYEAD (62 aa)) form the 3Ecto domain. Disulfide bonds link C2251–C2275 and C2266–C2272. 3 helical membrane passes run 2313 to 2333 (LIVS…LISI), 2343 to 2363 (LFML…ANML), and 2365 to 2385 (AHVF…FILF). Residues 2383-2473 (ILFRHVAYGC…ELKRPIQPTD (91 aa)) are Y1. One can recognise a CoV Nsp3 Y domain in the interval 2383-2750 (ILFRHVAYGC…LTTPFSLKGG (368 aa)). Residues H2387, C2392, C2397, C2400, C2433, H2436, C2440, and C2443 each coordinate Zn(2+). The interval 2387-2400 (HVAYGCSKPGCLFC) is ZF1. Residues 2433-2443 (CSKHQWNCIDC) are ZF2. Positions 2474-2566 (VAYHTVTDVK…MVDKNLITTA (93 aa)) are Y2. The tract at residues 2474–2750 (VAYHTVTDVK…LTTPFSLKGG (277 aa)) is coV-Y. A Y3 region spans residues 2567–2649 (NTGTSVTETM…DSVMSAVSAG (83 aa)). The segment at 2650-2750 (LELTDESCNN…LTTPFSLKGG (101 aa)) is Y4. A run of 7 helical transmembrane segments spans residues 2752-2772 (VFSY…IGLW), 2824-2844 (STFG…VAVV), 3009-3029 (VFDL…FLAL), 3031-3051 (ASSI…YYLI), 3063-3083 (IVFV…VFQV), 3090-3110 (VYAI…SVIM), and 3115-3135 (LVMY…SVVV). An HD2 region spans residues 2752 to 3135 (VFSYFVYVCF…FCLLYISVVV (384 aa)). The Nsp4C domain occupies 3149–3246 (LGTSVRSDGT…TASVSTSFLQ (98 aa)). The Peptidase C30 domain maps to 3247–3549 (SGIVKMVNPT…YQQLAGIKLQ (303 aa)). Catalysis depends on for 3CL-PRO activity residues H3287 and C3391. A run of 7 helical transmembrane segments spans residues 3558-3578 (GIVC…TAFV), 3588-3608 (TNML…MLLV), 3614-3634 (YLTM…YLVV), 3657-3677 (TYTD…FVTL), 3684-3704 (LFSF…WYMG), 3711-3731 (ILLM…LSMA), and 3755-3775 (IVLV…GLFS). The HD3 stretch occupies residues 3558–3775 (GIVCWIMAST…IISCYWGLFS (218 aa)). The RdRp Nsp7 cofactor domain occupies 3837–3925 (SKLTDVKCAN…DYAKDNTVLQ (89 aa)). Residues 3926-4122 (ALQSEFVNMA…HNEVSATVLQ (197 aa)) enclose the RdRp Nsp8 cofactor domain. The Nsp9 ssRNA-binding domain occupies 4123–4232 (NNELMPAKLK…GTISSTVRLQ (110 aa)). The 138-residue stretch at 4233 to 4370 (AGTATEYASN…CVSTDTTVQS (138 aa)) folds into the ExoN/MTase coactivator domain. The Zn(2+) site is built by C4306, C4309, H4315, C4322, C4348, C4351, C4359, and C4361. 2 zinc fingers span residues 4306–4322 (CIYC…DGLC) and 4348–4361 (CQVC…SCSC). The 256-residue stretch at 4375 to 4630 (FLNRVRGTSV…DCELYVNNAY (256 aa)) folds into the NiRAN domain. Residues N4578 and D4587 each contribute to the Mn(2+) site. The 99-residue stretch at 4631–4729 (RLFDLVQYDF…MNMDVDTHRY (99 aa)) folds into the Nsp12 Interface domain. Zn(2+)-binding residues include H4660, C4666, C4671, C4675, and C4852. One can recognise a Nsp12 RNA-dependent RNA polymerase domain in the interval 4730 to 5297 (RLSLKDLLLY…NMYLRSAVMQ (568 aa)). The interval 4732–4946 (SLKDLLLYAA…HQKCLKSIAA (215 aa)) is rdRp Fingers N-ter. Positions 4947 to 4985 (TRGVPVVIGTTKFYGGWDDMLRRLIKDVDNPVLMGWDYP) are rdRp Palm N-ter. Positions 4977–5139 (PVLMGWDYPK…CYNSDYASKG (163 aa)) constitute a RdRp catalytic domain. Residues 4986-5044 (KCDRAMPNILRIVSSLVLARKHEACCSQSDRFYRLANECAQVLSEIVMCGGCYYVKPGG) form a rdRp Fingers C-ter region. Positions 5007, 5010, and 5011 each coordinate Zn(2+). Residues 5045 to 5180 (TSSGDATTAF…NNGPHEFCSQ (136 aa)) form a rdRp Palm C-ter region. Residues S5124, D5125, and D5126 contribute to the active site. Residues 5181-5297 (HTMLVKMDGD…NMYLRSAVMQ (117 aa)) form a rdRp Thumb region. The region spanning 5298–5410 (SVGACVVCSS…DDFNRIASCK (113 aa)) is the CV ZBD domain. Zn(2+) is bound by residues C5302, C5305, C5313, C5316, C5323, C5326, H5330, H5336, C5347, C5352, C5369, and H5372. The (+)RNA virus helicase ATP-binding domain maps to 5553–5734 (SVLETFQNNV…MCCLGPDIFL (182 aa)). ATP is bound at residue 5578-5585 (GPPGTGKS). A (+)RNA virus helicase C-terminal domain is found at 5735 to 5904 (GTCYRCPKEI…VETRVQCSTN (170 aa)). The region spanning 5971–6186 (LFITKEEAVK…RCLAVYDCFC (216 aa)) is the ExoN domain. Catalysis depends on residues D5989, E5991, and E6090. Residues C6106, C6109, C6125, H6128, H6156, C6160, and H6163 each coordinate Zn(2+). Residues H6167 and D6172 contribute to the active site. Position 6178 (C6178) interacts with Zn(2+). Residues 6195–6421 (YPIISNELSI…NLWNTFTKLQ (227 aa)) form the N7-MTase domain. 6230 to 6236 (DIGNPKA) is a binding site for S-adenosyl-L-methionine. The interval 6308-6322 (CNGGSLYVNKHAFHT) is gpppA-binding. Residues C6346, C6367, C6378, and H6381 each coordinate Zn(2+). Positions 6422–6482 (SLENVVYNLV…NVAVELFAKR (61 aa)) constitute a Nsp15 N-terminal oligomerization domain. An AV-Nsp11N/CoV-Nsp15M domain is found at 6483 to 6603 (SIRHHPELKL…FAVRKEGQDV (121 aa)). The NendoU domain maps to 6653 to 6792 (TCRTDMEKDF…NDEKVMTFYP (140 aa)). Active-site residues include H6683, H6698, K6738, K6841, D6925, K6965, and E6998. In terms of domain architecture, Nidovirus-type SAM-dependent 2'-O-MTase spans 6797-7091 (ASDWKPGYSM…KEVFVGDSLV (295 aa)).

The protein belongs to the coronaviruses polyprotein 1ab family. Interacts with host PHB and PHB2. As to quaternary structure, interacts with papain-like protease nsp3 and non-structural protein 6. In terms of assembly, monomer. Homodimer. Only the homodimer shows catalytic activity. Interacts with nsp8 and nsp12 to form the replication-transcription complex (RTC): nsp12, nsp7, two subunits of nsp8, and up to two subunits of nsp13. As to quaternary structure, interacts with nsp7, nsp13 and nsp12 to form the replication-transcription complex (RTC): nsp12, nsp7, two subunits of nsp8, and up to two subunits of nsp13. In terms of assembly, interacts with nsp12. Interacts with proofreading exoribonuclease nsp14 and 2'-O-methyltransferase nsp16; these interactions enhance nsp14 and nsp16 enzymatic activities. As to quaternary structure, interacts with nsp7 and nsp8 to form the replication-transcription complex (RTC): nsp12, nsp7, two subunits of nsp8, and up to two subunits of nsp13. Interacts with nsp9. In terms of assembly, interacts with nsp8 to form the replication-transcription complex (RTC): nsp12, nsp7, two subunits of nsp8, and up to two subunits of nsp13. Mn(2+) serves as cofactor. It depends on Mg(2+) as a cofactor. In terms of processing, specific enzymatic cleavages in vivo by its own proteases yield mature proteins. 3CL-PRO and PL-PRO proteinases are autocatalytically processed.

It is found in the host membrane. It localises to the host cytoplasm. The protein resides in the host perinuclear region. Its subcellular location is the host endoplasmic reticulum-Golgi intermediate compartment. The catalysed reaction is RNA(n) + a ribonucleoside 5'-triphosphate = RNA(n+1) + diphosphate. It carries out the reaction ATP + H2O = ADP + phosphate + H(+). It catalyses the reaction Thiol-dependent hydrolysis of ester, thioester, amide, peptide and isopeptide bonds formed by the C-terminal Gly of ubiquitin (a 76-residue protein attached to proteins as an intracellular targeting signal).. The enzyme catalyses a 5'-end (N(7)-methyl 5'-triphosphoguanosine)-ribonucleoside in mRNA + S-adenosyl-L-methionine = a 5'-end (N(7)-methyl 5'-triphosphoguanosine)-(2'-O-methyl-ribonucleoside) in mRNA + S-adenosyl-L-homocysteine + H(+). The catalysed reaction is uridylyl-uridylyl-ribonucleotide-RNA = a 3'-end uridylyl-2',3'-cyclophospho-uridine-RNA + a 5'-end dephospho-ribonucleoside-RNA. It carries out the reaction a 5'-end diphospho-ribonucleoside in mRNA + GTP + H(+) = a 5'-end (5'-triphosphoguanosine)-ribonucleoside in mRNA + diphosphate. It catalyses the reaction a 5'-end (5'-triphosphoguanosine)-ribonucleoside in mRNA + S-adenosyl-L-methionine = a 5'-end (N(7)-methyl 5'-triphosphoguanosine)-ribonucleoside in mRNA + S-adenosyl-L-homocysteine. Functionally, the replicase polyprotein of coronaviruses is a multifunctional protein: it contains the activities necessary for the transcription of negative stranded RNA, leader RNA, subgenomic mRNAs and progeny virion RNA as well as proteinases responsible for the cleavage of the polyprotein into functional products. Inhibits host translation by interacting with the 40S ribosomal subunit. The nsp1-40S ribosome complex further induces an endonucleolytic cleavage near the 5'UTR of host mRNAs, targeting them for degradation. Viral mRNAs are not susceptible to nsp1-mediated endonucleolytic RNA cleavage thanks to the presence of a 5'-end leader sequence and are therefore protected from degradation. By suppressing host gene expression, nsp1 facilitates efficient viral gene expression in infected cells and evasion from host immune response. In terms of biological role, may play a role in the modulation of host cell survival signaling pathway by interacting with host PHB and PHB2. Indeed, these two proteins play a role in maintaining the functional integrity of the mitochondria and protecting cells from various stresses. Its function is as follows. Responsible for the cleavages located at the N-terminus of the replicase polyprotein. In addition, PL-PRO possesses a deubiquitinating/deISGylating activity and processes both 'Lys-48'- and 'Lys-63'-linked polyubiquitin chains from cellular substrates. Participates together with nsp4 in the assembly of virally-induced cytoplasmic double-membrane vesicles necessary for viral replication. Antagonizes innate immune induction of type I interferon by blocking the phosphorylation, dimerization and subsequent nuclear translocation of host IRF3. Also prevents host NF-kappa-B signaling. Functionally, participates in the assembly of virally-induced cytoplasmic double-membrane vesicles necessary for viral replication. Cleaves the C-terminus of replicase polyprotein at 11 sites. Recognizes substrates containing the core sequence [ILMVF]-Q-|-[SGACN]. Also able to bind an ADP-ribose-1''-phosphate (ADRP). In terms of biological role, plays a role in the initial induction of autophagosomes from host endoplasmic reticulum. Later, limits the expansion of these phagosomes that are no longer able to deliver viral components to lysosomes. Its function is as follows. Forms a hexadecamer with nsp8 (8 subunits of each) that may participate in viral replication by acting as a primase. Alternatively, may synthesize substantially longer products than oligonucleotide primers. Functionally, forms a hexadecamer with nsp7 (8 subunits of each) that may participate in viral replication by acting as a primase. Alternatively, may synthesize substantially longer products than oligonucleotide primers. Forms a primer, NSP9-pU, which is utilized by the polymerase for the initiation of RNA chains. Interacts with ribosome signal recognition particle RNA (SRP). Together with NSP8, suppress protein integration into the cell membrane, thereby disrupting host immune defenses. In terms of biological role, plays a pivotal role in viral transcription by stimulating both nsp14 3'-5' exoribonuclease and nsp16 2'-O-methyltransferase activities. Therefore plays an essential role in viral mRNAs cap methylation. Its function is as follows. RNA-directed RNA polymerase that catalyzes the transcription of viral genomic and subgenomic RNAs. Acts in complex with nsp7 and nsp8 to transcribe both the minus and positive strands of genomic RNA. The kinase-like NiRAN domain of NSP12 attaches one or more nucleotides to the amino terminus of NSP9, forming a covalent RNA-protein intermediate that serves as transcription/replication primer. Subgenomic RNAs (sgRNAs) are formed by discontinuous transcription: The polymerase has the ability to pause at transcription-regulating sequences (TRS) and jump to the leader TRS, resulting in a major deletion. This creates a series of subgenomic RNAs that are replicated, transcribed and translated. In addition, Nsp12 is a subunit of the viral RNA capping enzyme that catalyzes the RNA guanylyltransferase reaction for genomic and sub-genomic RNAs. Subsequently, the NiRAN domain transfers RNA to GDP, and forms the core cap structure GpppA-RNA. Functionally, multi-functional protein with a zinc-binding domain in N-terminus displaying RNA and DNA duplex-unwinding activities with 5' to 3' polarity. Activity of helicase is dependent on magnesium. Plays a role in viral RNA synthesis through two distinct activities. The N7-guanine methyltransferase activity plays a role in the formation of the cap structure GpppA-RNA. The proofreading exoribonuclease reduces the sensitivity of the virus to RNA mutagens during replication. This activity acts on both ssRNA and dsRNA in a 3'-5' direction. In terms of biological role, plays a role in viral transcription/replication and prevents the simultaneous activation of host cell dsRNA sensors, such as MDA5/IFIH1, OAS, and PKR. Acts by degrading the 5'-polyuridines generated during replication of the poly(A) region of viral genomic and subgenomic RNAs. Catalyzes a two-step reaction in which a 2'3'-cyclic phosphate (2'3'-cP) is first generated by 2'-O transesterification, which is then hydrolyzed to a 3'-phosphate (3'-P). If not degraded, poly(U) RNA would hybridize with poly(A) RNA tails and activate host dsRNA sensors. Its function is as follows. Methyltransferase that mediates mRNA cap 2'-O-ribose methylation to the 5'-cap structure of viral mRNAs. N7-methyl guanosine cap is a prerequisite for binding of nsp16. Therefore plays an essential role in viral mRNAs cap methylation which is essential to evade immune system. The chain is Replicase polyprotein 1ab (rep) from Bos taurus (Bovine).